We begin with the raw amino-acid sequence, 398 residues long: Acetate kinase 1 (398 aa).

Asparagine 9 contributes to the Mg(2+) binding site. Lysine 16 provides a ligand contact to ATP. Arginine 89 provides a ligand contact to substrate. The Proton donor/acceptor role is filled by aspartate 146. Residues 206-210, 281-283, and 329-333 each bind ATP; these read HLGNG, DCR, and GIGEN. Position 384 (glutamate 384) interacts with Mg(2+).

It belongs to the acetokinase family. As to quaternary structure, homodimer. It depends on Mg(2+) as a cofactor. Requires Mn(2+) as cofactor.

It is found in the cytoplasm. It carries out the reaction acetate + ATP = acetyl phosphate + ADP. It functions in the pathway metabolic intermediate biosynthesis; acetyl-CoA biosynthesis; acetyl-CoA from acetate: step 1/2. Functionally, catalyzes the formation of acetyl phosphate from acetate and ATP. Can also catalyze the reverse reaction. The sequence is that of Acetate kinase 1 from Vibrio vulnificus (strain CMCP6).